We begin with the raw amino-acid sequence, 191 residues long: Crossover junction endodeoxyribonuclease RuvC (191 aa).

Active-site residues include D7, E67, and D141. Mg(2+)-binding residues include D7, E67, and D141.

Belongs to the RuvC family. Homodimer which binds Holliday junction (HJ) DNA. The HJ becomes 2-fold symmetrical on binding to RuvC with unstacked arms; it has a different conformation from HJ DNA in complex with RuvA. In the full resolvosome a probable DNA-RuvA(4)-RuvB(12)-RuvC(2) complex forms which resolves the HJ. Requires Mg(2+) as cofactor.

Its subcellular location is the cytoplasm. It catalyses the reaction Endonucleolytic cleavage at a junction such as a reciprocal single-stranded crossover between two homologous DNA duplexes (Holliday junction).. The RuvA-RuvB-RuvC complex processes Holliday junction (HJ) DNA during genetic recombination and DNA repair. Endonuclease that resolves HJ intermediates. Cleaves cruciform DNA by making single-stranded nicks across the HJ at symmetrical positions within the homologous arms, yielding a 5'-phosphate and a 3'-hydroxyl group; requires a central core of homology in the junction. The consensus cleavage sequence is 5'-(A/T)TT(C/G)-3'. Cleavage occurs on the 3'-side of the TT dinucleotide at the point of strand exchange. HJ branch migration catalyzed by RuvA-RuvB allows RuvC to scan DNA until it finds its consensus sequence, where it cleaves and resolves the cruciform DNA. This chain is Crossover junction endodeoxyribonuclease RuvC, found in Myxococcus xanthus (strain DK1622).